The primary structure comprises 464 residues: L-cysteine desulfhydrase-like protein lolT2 (464 aa).

The residue at position 227 (Lys-227) is an N6-(pyridoxal phosphate)lysine.

Belongs to the class-V pyridoxal-phosphate-dependent aminotransferase family. Pyridoxal 5'-phosphate is required as a cofactor.

The protein operates within alkaloid biosynthesis. L-cysteine desulfhydrase-like protein; part of the gene cluster that mediates the biosynthesis of loline alkaloids, potent insecticidal agents composed of a pyrrolizidine ring system and an uncommon ether bridge linking carbons 2 and 7. Lolines are structurally differentiated by the various modifications of the L-amino group and include norloline, loline, N-methylloline, N-acetylloline, N-acetylnorloline, and N-formylloline. The first committed step is the condensation of O-acetyl-L-homoserine (derived from L-aspartic acid) and L-proline, probably catalyzed by the gamma-type pyridoxal 5'-phosphate(PLP)-dependent enzyme lolC, to give the diamino diacid, NACPP. Ensuing cyclization, decarboxylation, and acetylation steps yield 1-exo-acetamidopyrrolizidine (AcAP). LolO is required for installation of the ether bridge upon the pathway intermediate, 1-exo-acetamidopyrrolizidine (AcAP). In sequential 2-oxoglutarate- and O(2)-consuming steps, lolO removes hydrogens from C2 and C7 of AcAP to form both carbon-oxygen bonds in N-acetylnorloline (NANL), the precursor to all other lolines. The enzymes lolD, lolE, lolF and lolT have also been proposed to be involved in the ether-bridge installation. Further processing of the exocyclic moiety of NANL by fungal N-acetamidase (LolN), methyltransferase (LolM), and cytochrome P450 (LolP) enzymes, with occasional involvement of a plant acetyltransferase, generates the other known lolines. LolN transforms NANL to norlonine which is monomethylated and dimethylated to respectively lonine and N-methyllonine (NML) by lolM. LolP catalyzes hydroxylation of the methyl group in N-methylloline (NML) and further oxygenation to N-formylloline (NFL). A plant acetyltransferase is responsible for the acetylation of loline to form N-acetylloline (NAL). LolA might interact with aspartate kinase to prevent feedback inhibition of its activity by these end products and thereby promote production of L-homoserine from L-aspartate. This is L-cysteine desulfhydrase-like protein lolT2 from Epichloe uncinata (Endophyte fungus).